We begin with the raw amino-acid sequence, 360 residues long: Peptide chain release factor 1 (360 aa).

N5-methylglutamine is present on Gln235.

Belongs to the prokaryotic/mitochondrial release factor family. Methylated by PrmC. Methylation increases the termination efficiency of RF1.

The protein resides in the cytoplasm. Peptide chain release factor 1 directs the termination of translation in response to the peptide chain termination codons UAG and UAA. The chain is Peptide chain release factor 1 from Burkholderia mallei (strain NCTC 10247).